The sequence spans 959 residues: MARLNPLSFTPGPVIFFTCAVYIALFAALLTVHLRVPDYPSKTPDGVNLTQAWSDLEKITRRFHPYNSHANDDVRDYLLTRVKSIIASKKLGGDQVELIDDNESNATFSSGSTTVYFEGTNIIVAIRGSEDDEPYHSPQSSPPGERRLDNGGVLVNAHYDSVSSGYGATDDGVGVVTVLQLLSYFTESKNWPKRTVILLLNNGEEDFLNGAKAFMRHPISQIAHTFVNLEGAGAGGRATMFRSTDTEVTRYYKASSHPFASVVSGDGFKKRLIRSETDYKVFYEELGLRGLDIAFMEPRARYHTVEDSTRETSLNSVWHMLSAAIATTSGLASDTSEQFSGSEDEHEPYTGKVKTGHGTDAVWFDLFGKVFVVFQLHTMFALCVTLLVVAPLFLIGLTFGLSKADKNYLFARKAYMYSSDDDHPVHLYGWRGFFRFPIVFSIATAVVVGLAYLMVRLNPLILYSSPYAVWSMMLSAWFSVAWFFSRGASAMRPSALQRMYALIWLFAGSFALLAFVTVLSNNYQVAGGYFALFYFAGIFLALVLSYLELFFAPTKTAFARYSAQGDEPVSRPLTGTTTAARSEEPPIADDDATETTSLLRGDRRSFARHSGRRDSIDDENGNRDEEPVQLDLKQPYPGEQDWSGKLPGWLWLLQLLLVAPIVVILVGQIALLLTSALHQTPADGNSSLFVYLAFALLTTLLLAPIGPFIHRFTWHVPTFVFLVCVATVIYNLVAFPFSREHRLKVYFVQQVDLATGNNRVSLTGVDGYVQRIVADLPSAQGEQINCTTPEAANRKELMTCTWPGLPAQVVTRASRFSNKTDTDGWLDFSITTSNKTNEATISVAGQNTRACRIVVDSHHSGVTNVTVAGAVSDPRFKAVGETGSREIRLWHREWSHPWNVSVTWPRENSKPSGRIICLWSDANAGDIPAFDEVQHYLPVWAIPSKISDGLVEGFKYFQV.

Over 1 to 13 the chain is Cytoplasmic; it reads MARLNPLSFTPGP. A helical transmembrane segment spans residues 14-34; sequence VIFFTCAVYIALFAALLTVHL. Residues 35–378 lie on the Vacuolar side of the membrane; that stretch reads RVPDYPSKTP…KVFVVFQLHT (344 aa). 3 N-linked (GlcNAc...) asparagine glycosylation sites follow: Asn-48, Asn-102, and Asn-105. Residues 128–149 form a disordered region; that stretch reads GSEDDEPYHSPQSSPPGERRLD. The Zn(2+) site is built by His-158 and Asp-170. Glu-204 serves as the catalytic Proton acceptor. Zn(2+) is bound by residues Glu-205, Glu-230, and His-303. A helical membrane pass occupies residues 379 to 399; that stretch reads MFALCVTLLVVAPLFLIGLTF. The Cytoplasmic portion of the chain corresponds to 400–432; the sequence is GLSKADKNYLFARKAYMYSSDDDHPVHLYGWRG. The helical transmembrane segment at 433 to 453 threads the bilayer; it reads FFRFPIVFSIATAVVVGLAYL. Topologically, residues 454 to 463 are vacuolar; sequence MVRLNPLILY. The helical transmembrane segment at 464 to 484 threads the bilayer; that stretch reads SSPYAVWSMMLSAWFSVAWFF. Residues 485–498 lie on the Cytoplasmic side of the membrane; sequence SRGASAMRPSALQR. Residues 499 to 519 traverse the membrane as a helical segment; it reads MYALIWLFAGSFALLAFVTVL. Residues 520-524 lie on the Vacuolar side of the membrane; that stretch reads SNNYQ. A helical membrane pass occupies residues 525–545; that stretch reads VAGGYFALFYFAGIFLALVLS. The Cytoplasmic portion of the chain corresponds to 546-645; sequence YLELFFAPTK…YPGEQDWSGK (100 aa). Disordered regions lie at residues 566–594 and 606–635; these read DEPVSRPLTGTTTAARSEEPPIADDDATE and FARHSGRRDSIDDENGNRDEEPVQLDLKQP. Residues 612 to 626 show a composition bias toward basic and acidic residues; that stretch reads RRDSIDDENGNRDEE. A helical transmembrane segment spans residues 646–666; the sequence is LPGWLWLLQLLLVAPIVVILV. At 667–688 the chain is on the vacuolar side; sequence GQIALLLTSALHQTPADGNSSL. N-linked (GlcNAc...) asparagine glycosylation is present at Asn-685. The helical transmembrane segment at 689–709 threads the bilayer; sequence FVYLAFALLTTLLLAPIGPFI. Residues 710 to 716 are Cytoplasmic-facing; the sequence is HRFTWHV. The helical transmembrane segment at 717–737 threads the bilayer; that stretch reads PTFVFLVCVATVIYNLVAFPF. Topologically, residues 738–959 are vacuolar; that stretch reads SREHRLKVYF…LVEGFKYFQV (222 aa). N-linked (GlcNAc...) asparagine glycosylation is found at Asn-785, Asn-818, Asn-834, Asn-864, and Asn-899.

This sequence belongs to the peptidase M28 family. Zn(2+) is required as a cofactor.

It is found in the vacuole membrane. Functionally, may be involved in vacuolar sorting and osmoregulation. The polypeptide is Vacuolar membrane protease (Phaeosphaeria nodorum (strain SN15 / ATCC MYA-4574 / FGSC 10173) (Glume blotch fungus)).